Here is a 290-residue protein sequence, read N- to C-terminus: Eukaryotic translation initiation factor 3 subunit F-2 (290 aa).

An MPN domain is found at 12 to 150 (VRLQPLVLFQ…TRLYCAVTMG (139 aa)).

The protein belongs to the eIF-3 subunit F family. In terms of assembly, component of the eukaryotic translation initiation factor 3 (eIF-3) complex. The eIF-3 complex interacts with pix.

Its subcellular location is the cytoplasm. Functionally, component of the eukaryotic translation initiation factor 3 (eIF-3) complex, which is involved in protein synthesis of a specialized repertoire of mRNAs and, together with other initiation factors, stimulates binding of mRNA and methionyl-tRNAi to the 40S ribosome. The eIF-3 complex specifically targets and initiates translation of a subset of mRNAs involved in cell proliferation. The polypeptide is Eukaryotic translation initiation factor 3 subunit F-2 (Drosophila mojavensis (Fruit fly)).